Reading from the N-terminus, the 224-residue chain is Adenylate kinase (224 aa).

Residue 10–15 (GSGKGT) participates in ATP binding. The segment at 30-59 (ESGAIFRENISKGTELGAKAKEYIDRGDLV) is NMP. Residues serine 31, arginine 36, 57–59 (DLV), 85–88 (GFPR), and glutamine 92 contribute to the AMP site. The tract at residues 126–165 (GRRLCVNDNNHPNNIFIDAIKPDGDKCRVCGGELKTRSDD) is LID. Residue arginine 127 coordinates ATP. Residues arginine 162 and arginine 174 each coordinate AMP. Position 211 (proline 211) interacts with ATP.

This sequence belongs to the adenylate kinase family. Monomer.

Its subcellular location is the cytoplasm. The catalysed reaction is AMP + ATP = 2 ADP. The protein operates within purine metabolism; AMP biosynthesis via salvage pathway; AMP from ADP: step 1/1. In terms of biological role, catalyzes the reversible transfer of the terminal phosphate group between ATP and AMP. Plays an important role in cellular energy homeostasis and in adenine nucleotide metabolism. The chain is Adenylate kinase from Desulfosudis oleivorans (strain DSM 6200 / JCM 39069 / Hxd3) (Desulfococcus oleovorans).